Reading from the N-terminus, the 450-residue chain is tRNA modification GTPase MnmE (450 aa).

(6S)-5-formyl-5,6,7,8-tetrahydrofolate-binding residues include R21, E80, and K119. Positions 213 to 373 (GIKVVIIGKP…LEEEIIKSVK (161 aa)) constitute a TrmE-type G domain. Residue N223 coordinates K(+). GTP contacts are provided by residues 223 to 228 (NVGKST), 242 to 248 (TDIPGTT), and 267 to 270 (DTAG). S227 provides a ligand contact to Mg(2+). K(+) contacts are provided by T242, I244, and T247. Mg(2+) is bound at residue T248. A (6S)-5-formyl-5,6,7,8-tetrahydrofolate-binding site is contributed by K450.

It belongs to the TRAFAC class TrmE-Era-EngA-EngB-Septin-like GTPase superfamily. TrmE GTPase family. In terms of assembly, homodimer. Heterotetramer of two MnmE and two MnmG subunits. The cofactor is K(+).

The protein localises to the cytoplasm. Exhibits a very high intrinsic GTPase hydrolysis rate. Involved in the addition of a carboxymethylaminomethyl (cmnm) group at the wobble position (U34) of certain tRNAs, forming tRNA-cmnm(5)s(2)U34. The chain is tRNA modification GTPase MnmE from Pseudothermotoga lettingae (strain ATCC BAA-301 / DSM 14385 / NBRC 107922 / TMO) (Thermotoga lettingae).